The chain runs to 514 residues: Anthranilate synthase component 1 (514 aa).

Residues T40 and 291 to 293 (PYM) contribute to the L-tryptophan site. 328 to 329 (GT) is a binding site for chorismate. E361 is a Mg(2+) binding site. Chorismate-binding positions include Y449, R469, 482 to 484 (GAG), and G484. E497 provides a ligand contact to Mg(2+).

Belongs to the anthranilate synthase component I family. As to quaternary structure, heterotetramer consisting of two non-identical subunits: a beta subunit (TrpG) and a large alpha subunit (TrpE). Mg(2+) is required as a cofactor.

The enzyme catalyses chorismate + L-glutamine = anthranilate + pyruvate + L-glutamate + H(+). Its pathway is amino-acid biosynthesis; L-tryptophan biosynthesis; L-tryptophan from chorismate: step 1/5. Feedback inhibited by tryptophan. Part of a heterotetrameric complex that catalyzes the two-step biosynthesis of anthranilate, an intermediate in the biosynthesis of L-tryptophan. In the first step, the glutamine-binding beta subunit (TrpG) of anthranilate synthase (AS) provides the glutamine amidotransferase activity which generates ammonia as a substrate that, along with chorismate, is used in the second step, catalyzed by the large alpha subunit of AS (TrpE) to produce anthranilate. In the absence of TrpG, TrpE can synthesize anthranilate directly from chorismate and high concentrations of ammonia. The sequence is that of Anthranilate synthase component 1 (trpE) from Buchnera aphidicola subsp. Rhopalosiphum maidis.